A 278-amino-acid polypeptide reads, in one-letter code: HTH-type transcriptional regulator ExsA (278 aa).

The 99-residue stretch at 171-269 folds into the HTH araC/xylS-type domain; it reads ERLQLFMEKH…GCTPSRSRQG (99 aa). DNA-binding regions (H-T-H motif) lie at residues 188-209 and 236-259; these read SDFS…GSVY and IVDI…RRRF.

Homodimer. Interacts with ExsD; this interaction inhibits ExsA activity.

Its activity is regulated as follows. In the absence of inducing signals such as low Ca(2+) or host cell contact, the T3SS/injectisome is expressed at a low basal level and exists in a quiescent state due to ExsA sequestration by ExsD in a 1:1 complex. Upon host cell contact, this interaction is disrupted by the anti-antiactivator protein ExsC leading to ExsA activation. Transcriptional regulator that plays an essential role in the activation the type III secretion system (T3SS) operons. In addition, ExsA directly regulates the transcription of ImpA virulence factor that cooperatively inhibits the functions of host macrophages together with the T3SS. The polypeptide is HTH-type transcriptional regulator ExsA (exsA) (Pseudomonas aeruginosa (strain ATCC 15692 / DSM 22644 / CIP 104116 / JCM 14847 / LMG 12228 / 1C / PRS 101 / PAO1)).